We begin with the raw amino-acid sequence, 344 residues long: Protease HtpX homolog (344 aa).

3 helical membrane-spanning segments follow: residues 8–28 (VALGLYMLGYLFMFVIAATVA), 46–66 (ALTGVMIVLTTAFVIYLFVLV), and 74–94 (VSFLVGLIAFVVLMNLLTYVA). Histidine 172 lines the Zn(2+) pocket. Glutamate 173 is an active-site residue. Histidine 176 provides a ligand contact to Zn(2+). The next 2 helical transmembrane spans lie at 183-203 (AIMLLFGVLPSVVYYLGVTAV) and 220-240 (LAVGVVAVLASFLIQLLVLAF). Residue glutamate 245 coordinates Zn(2+).

It belongs to the peptidase M48B family. Zn(2+) is required as a cofactor.

The protein resides in the cell membrane. This is Protease HtpX homolog from Pyrobaculum calidifontis (strain DSM 21063 / JCM 11548 / VA1).